Consider the following 440-residue polypeptide: Deoxyguanosinetriphosphate triphosphohydrolase-like protein (440 aa).

Residues 61-256 (RLIHSLEVSC…MEAADDLCYS (196 aa)) enclose the HD domain.

Belongs to the dGTPase family. Type 3 subfamily.

In Synechocystis sp. (strain ATCC 27184 / PCC 6803 / Kazusa), this protein is Deoxyguanosinetriphosphate triphosphohydrolase-like protein.